The chain runs to 902 residues: Transcription factor FPSE_08121 (902 aa).

The interval 1 to 47 is disordered; the sequence is MVSPDNRPGTQGPSASAHAHDSRVPRKRPGSWDNNPSTAGNRAVKKR. The zn(2)-C6 fungal-type DNA-binding region spans 52 to 81; the sequence is CVSCRDRKVRCDVVNGGPPCTNCRLDDVDC. Disordered stretches follow at residues 92–189, 208–234, 258–277, and 820–839; these read NPAR…EAEQ, HCEQ…PANP, ATEA…SANT, and TGVA…PNMT. Residues 120–137 are compositionally biased toward low complexity; sequence TDADTAAPGPAPGSASAT. Positions 168–177 are enriched in acidic residues; it reads ETICDDDENE. 4 stretches are compositionally biased toward polar residues: residues 178–187, 220–234, 262–277, and 826–839; these read NNSWHNQQEA, GAAT…PANP, PPSS…SANT, and GQRS…PNMT.

The protein localises to the nucleus. Functionally, transcription factor; part of the Fusarium detoxification of benzoxazolinone cluster involved in the degradation of benzoxazolinones produced by the host plant. Maize, wheat, and rye produce the 2 benzoxazinone phytoanticipins 2,4-dihy-droxy-7-methoxy-1,4-benzoxazin-3-one (DIMBOA) and 2,4-dihydroxy-1,4-benzoxazin-3-one (DIBOA) that, due to their inherent instability once released, spontaneously degrade to the more stable corresponding benzoxazolinones, 6-methoxy-2-benzoxazolinone (MBOA) and 2-benzoxazolinone (BOA), respectively. FPSE_08121 positively regulates the expression of the FBD cluster gene FPSE_08120 in response to 2-aminophenol (2-AP) treatment and contributes quantitatively to benzoxazolinone tolerance. The chain is Transcription factor FPSE_08121 from Fusarium pseudograminearum (strain CS3096) (Wheat and barley crown-rot fungus).